Consider the following 660-residue polypeptide: U-box domain-containing protein 13 (660 aa).

The interval 227–252 (DDNGEEQKVGVNSRSNGQTSTAASQK) is disordered. The segment covering 236–250 (GVNSRSNGQTSTAAS) has biased composition (polar residues). Residues 255–329 (VIPDDFRCPI…AQWCEANDIE (75 aa)) form the U-box domain. 5 ARM repeats span residues 384-423 (ADNR…NLSI), 425-464 (ENNK…SLSV), 466-505 (DENK…NLCI), 507-546 (QGNK…ILSS), and 548-587 (PEGK…HLCS). A disordered region spans residues 631 to 660 (AEQQKETAVSQPEEEAEPTHPESTTEAADT). The segment covering 651 to 660 (PESTTEAADT) has biased composition (polar residues).

Binds to SD11, SD16, SD17, SD18, SD113, SD129 and SD25. Phosphorylated by SD1-6 and SD1-7.

Its subcellular location is the nucleus. It localises to the cytoplasm. The enzyme catalyses S-ubiquitinyl-[E2 ubiquitin-conjugating enzyme]-L-cysteine + [acceptor protein]-L-lysine = [E2 ubiquitin-conjugating enzyme]-L-cysteine + N(6)-ubiquitinyl-[acceptor protein]-L-lysine.. Its pathway is protein modification; protein ubiquitination. In terms of biological role, functions as an E3 ubiquitin ligase. The sequence is that of U-box domain-containing protein 13 (PUB13) from Arabidopsis thaliana (Mouse-ear cress).